Reading from the N-terminus, the 139-residue chain is Plastocyanin (139 aa).

A signal peptide spans 1 to 34 (MKLIAASLRRLSLAVLTVLLVVSSFAVFTPSASA). The 105-residue stretch at 35-139 (ETYTVKLGSD…GMVGKITVAG (105 aa)) folds into the Plastocyanin-like domain. Cu cation contacts are provided by His-73, Cys-123, His-126, and Met-131.

The protein belongs to the plastocyanin family. Requires Cu(2+) as cofactor.

The protein resides in the cellular thylakoid membrane. Functionally, participates in electron transfer between P700 and the cytochrome b6-f complex in photosystem I. This Nostoc sp. (strain PCC 7120 / SAG 25.82 / UTEX 2576) protein is Plastocyanin (petE).